We begin with the raw amino-acid sequence, 296 residues long: DNA primase small subunit PriS (296 aa).

Residues aspartate 82, aspartate 84, and aspartate 191 contribute to the active site.

The protein belongs to the eukaryotic-type primase small subunit family. As to quaternary structure, heterodimer of a small subunit (PriS) and a large subunit (PriL). It depends on Mg(2+) as a cofactor. Mn(2+) is required as a cofactor.

Functionally, catalytic subunit of DNA primase, an RNA polymerase that catalyzes the synthesis of short RNA molecules used as primers for DNA polymerase during DNA replication. The small subunit contains the primase catalytic core and has DNA synthesis activity on its own. Binding to the large subunit stabilizes and modulates the activity, increasing the rate of DNA synthesis while decreasing the length of the DNA fragments, and conferring RNA synthesis capability. The DNA polymerase activity may enable DNA primase to also catalyze primer extension after primer synthesis. May also play a role in DNA repair. The polypeptide is DNA primase small subunit PriS (Methanopyrus kandleri (strain AV19 / DSM 6324 / JCM 9639 / NBRC 100938)).